Reading from the N-terminus, the 198-residue chain is LexA repressor (198 aa).

The segment at residues 28 to 47 is a DNA-binding region (H-T-H motif); sequence IRDIAKHFKLTPRGAHIHVL. Catalysis depends on for autocatalytic cleavage activity residues S120 and K157.

The protein belongs to the peptidase S24 family. As to quaternary structure, homodimer.

It carries out the reaction Hydrolysis of Ala-|-Gly bond in repressor LexA.. Its function is as follows. Represses a number of genes involved in the response to DNA damage (SOS response), including recA and lexA. In the presence of single-stranded DNA, RecA interacts with LexA causing an autocatalytic cleavage which disrupts the DNA-binding part of LexA, leading to derepression of the SOS regulon and eventually DNA repair. The protein is LexA repressor of Thermosipho africanus (strain TCF52B).